Here is a 524-residue protein sequence, read N- to C-terminus: Protein hunchback (524 aa).

2 disordered regions span residues 42 to 86 (IVKR…PQTQ) and 101 to 187 (YNHN…DEQS). Residues 59–75 (SGSDFHSSSPSSDTSQD) show a composition bias toward low complexity. Positions 76–86 (LQHSYQSPQTQ) are enriched in polar residues. Basic and acidic residues-rich tracts occupy residues 118-127 (KSEKEEKDME), 138-154 (RKPDDNQDHLRRLEMSL), and 164-178 (TSEHSVDELSGKSDN). 4 consecutive C2H2-type zinc fingers follow at residues 202-224 (FKCKQCDFVAITKLEQWNHSKVH), 231-253 (LTCPKCPFITEYKHHLEYHLRNH), 259-281 (FQCNKCDYTCVNKSMLNSHMKSH), and 298-311 (YCHSLKIHLRRYGH). Positions 402–442 (DLSKPGCSYTGEQKSRRKGPAFKVDPTQVESEEEDEETSTT) are disordered. 2 consecutive C2H2-type zinc fingers follow at residues 471–493 (NSCQYCNIAFGDAVLYTIHMGYH) and 499–523 (FTCNMCGVECSDKVSFFLHIARVSH).

It belongs to the hunchback C2H2-type zinc-finger protein family.

The protein localises to the nucleus. Gap class segmentation protein that controls development of head structures. The sequence is that of Protein hunchback (hb) from Tribolium castaneum (Red flour beetle).